A 307-amino-acid chain; its full sequence is Manganese-dependent inorganic pyrophosphatase (307 aa).

Residues His-7, Asp-11, Asp-13, Asp-66, His-88, and Asp-147 each coordinate Mn(2+).

The cofactor is Mn(2+).

Its subcellular location is the cytoplasm. It catalyses the reaction diphosphate + H2O = 2 phosphate + H(+). The protein is Manganese-dependent inorganic pyrophosphatase (ppaC) of Methanocaldococcus jannaschii (strain ATCC 43067 / DSM 2661 / JAL-1 / JCM 10045 / NBRC 100440) (Methanococcus jannaschii).